We begin with the raw amino-acid sequence, 160 residues long: S-protein homolog 13 (160 aa).

The signal sequence occupies residues 1-27 (MGRDLGWCFFVATVLLAAVLLPAPTIA).

It belongs to the plant self-incompatibility (S1) protein family.

Its subcellular location is the secreted. The polypeptide is S-protein homolog 13 (Arabidopsis thaliana (Mouse-ear cress)).